Reading from the N-terminus, the 649-residue chain is Microtubule-associated protein VP6 (649 aa).

Its subcellular location is the virion. The protein resides in the host cytoplasm. It localises to the host cytoskeleton. In terms of biological role, minor inner capsid component. Displays NTPase and RNA 5'-triphosphatase (RTPase) activities. May function as a cofactor of polymerase VP2. Associates with microtubules and plays a role in the formation, structural organization and morphology of viral inclusions, where the assembly of cores and the replication of viral RNA occur. In Cryphonectria parasitica (Chestnut blight fungus), this protein is Microtubule-associated protein VP6 (S6).